The primary structure comprises 769 residues: Serine protease HtrA-like (769 aa).

Over residues 1-20 the composition is skewed to basic residues; sequence MDIGKKHVIPKSQYRRKRRE. Residues 1-390 are disordered; that stretch reads MDIGKKHVIP…ATSKLNKGRA (390 aa). Basic and acidic residues-rich tracts occupy residues 21 to 64 and 71 to 108; these read FFHN…ERFK and LEQRNRDVNENKAEESKSNQDSKSAYNRDHYLTDDVSK. Over residues 126–137 the composition is skewed to polar residues; sequence YEQNSEATLSTK. A compositionally biased stretch (basic and acidic residues) spans 138 to 186; the sequence is STDKVESTDMRKLSSDKNKVGHEEQHVLSKPSEHDKETRIDFESSRTDS. Residues 247 to 262 are compositionally biased toward polar residues; it reads QQSQNEQTKTYTYGDS. 2 stretches are compositionally biased toward basic and acidic residues: residues 264–296 and 310–330; these read QNDKSNYENDLSHHMPSISDDKDNVMRENHIVD and KTDDDRKLDEKIHVEDKHKQN. Residues 331 to 347 are compositionally biased toward polar residues; sequence ADSSETVGYQSQSSASH. Residues 348 to 364 show a composition bias toward basic and acidic residues; that stretch reads RITEKRNNAINDHDKLN. Residues 366–390 are compositionally biased toward polar residues; it reads QKPNAKTSANNNQKKATSKLNKGRA. Residues 410-430 form a helical membrane-spanning segment; that stretch reads LVILMGIIILIVILNAIFNNV. Active-site charge relay system residues include His-504, Asp-534, and Ser-619. Residues 680-733 form the PDZ domain; that stretch reads IASLNSFERQAVKLPGKVKNGVVVDQVDNNGLADQSGLKKGDVITELDGKLLED.

This sequence belongs to the peptidase S1C family.

It localises to the cell membrane. In Staphylococcus aureus (strain MSSA476), this protein is Serine protease HtrA-like.